A 408-amino-acid polypeptide reads, in one-letter code: Multidrug resistance protein MdtG (408 aa).

The next 11 membrane-spanning stretches (helical) occupy residues Leu16–Phe36, Ile58–Ala78, Leu92–Ile112, Ala115–Val135, Thr146–Ala166, Pro173–Ile193, Leu224–Leu244, Val256–Pro276, Ile290–Thr310, Phe319–Asn339, and Ala378–Leu398.

The protein belongs to the major facilitator superfamily. DHA1 family. MdtG (TC 2.A.1.2.20) subfamily.

It is found in the cell inner membrane. In terms of biological role, confers resistance to fosfomycin and deoxycholate. In Escherichia coli O7:K1 (strain IAI39 / ExPEC), this protein is Multidrug resistance protein MdtG.